A 229-amino-acid polypeptide reads, in one-letter code: 2-phytyl-1,4-naphtoquinone methyltransferase (229 aa).

The protein belongs to the class I-like SAM-binding methyltransferase superfamily. MenG/UbiE family.

The enzyme catalyses demethylphylloquinol + S-adenosyl-L-methionine = phylloquinol + S-adenosyl-L-homocysteine + H(+). It participates in cofactor biosynthesis; phylloquinone biosynthesis. In terms of biological role, methyltransferase required for the conversion of 2-phytyl-1,4-beta-naphthoquinol to phylloquinol. In Nostoc sp. (strain PCC 7120 / SAG 25.82 / UTEX 2576), this protein is 2-phytyl-1,4-naphtoquinone methyltransferase.